The chain runs to 81 residues: Trefoil factor 3 (81 aa).

Residues 1 to 22 (METRALWLMLLVVLVAGSSGIA) form the signal peptide. The P-type domain occupies 31–74 (SQCMVPANVRVDCGYPSVTSEQCNNRGCCFDSSIPNVPWCFKPL). 3 disulfide bridges follow: C33-C59, C43-C58, and C53-C70.

In terms of assembly, monomer. Homodimer; disulfide-linked. Expressed in goblet cells of the intestines and colon (at protein level). Expressed abundantly in goblet cells of intestine and colon, and at low levels in stomach. No expression in brain, lung, spleen, kidney, uterus, pancreas, liver, heart or thymus.

The protein localises to the secreted. The protein resides in the extracellular space. It is found in the extracellular matrix. It localises to the cytoplasm. In terms of biological role, involved in the maintenance and repair of the intestinal mucosa. Promotes the mobility of epithelial cells in healing processes (motogen). The polypeptide is Trefoil factor 3 (Tff3) (Mus musculus (Mouse)).